The following is a 456-amino-acid chain: Bifunctional protein GlmU (456 aa).

A pyrophosphorylase region spans residues 1 to 229 (MLNNAMSVVI…LSEVEGVNNR (229 aa)). Residues 11–14 (LAAG), Lys-25, Gln-76, 81–82 (GT), 103–105 (YGD), Gly-140, Glu-154, Asn-169, and Asn-227 contribute to the UDP-N-acetyl-alpha-D-glucosamine site. Residue Asp-105 participates in Mg(2+) binding. Asn-227 is a Mg(2+) binding site. Residues 230–250 (LQLSRLERVYQSEQAEKLLLA) form a linker region. An N-acetyltransferase region spans residues 251–456 (GVMLRDPARF…EGWRRPVKKK (206 aa)). UDP-N-acetyl-alpha-D-glucosamine-binding residues include Arg-333 and Lys-351. Residue His-363 is the Proton acceptor of the active site. UDP-N-acetyl-alpha-D-glucosamine contacts are provided by Tyr-366 and Asn-377. Acetyl-CoA contacts are provided by residues Ala-380, 386–387 (NY), Ser-405, Ala-423, and Arg-440.

It in the N-terminal section; belongs to the N-acetylglucosamine-1-phosphate uridyltransferase family. The protein in the C-terminal section; belongs to the transferase hexapeptide repeat family. Homotrimer. Mg(2+) is required as a cofactor.

The protein resides in the cytoplasm. The enzyme catalyses alpha-D-glucosamine 1-phosphate + acetyl-CoA = N-acetyl-alpha-D-glucosamine 1-phosphate + CoA + H(+). It catalyses the reaction N-acetyl-alpha-D-glucosamine 1-phosphate + UTP + H(+) = UDP-N-acetyl-alpha-D-glucosamine + diphosphate. It functions in the pathway nucleotide-sugar biosynthesis; UDP-N-acetyl-alpha-D-glucosamine biosynthesis; N-acetyl-alpha-D-glucosamine 1-phosphate from alpha-D-glucosamine 6-phosphate (route II): step 2/2. Its pathway is nucleotide-sugar biosynthesis; UDP-N-acetyl-alpha-D-glucosamine biosynthesis; UDP-N-acetyl-alpha-D-glucosamine from N-acetyl-alpha-D-glucosamine 1-phosphate: step 1/1. It participates in bacterial outer membrane biogenesis; LPS lipid A biosynthesis. In terms of biological role, catalyzes the last two sequential reactions in the de novo biosynthetic pathway for UDP-N-acetylglucosamine (UDP-GlcNAc). The C-terminal domain catalyzes the transfer of acetyl group from acetyl coenzyme A to glucosamine-1-phosphate (GlcN-1-P) to produce N-acetylglucosamine-1-phosphate (GlcNAc-1-P), which is converted into UDP-GlcNAc by the transfer of uridine 5-monophosphate (from uridine 5-triphosphate), a reaction catalyzed by the N-terminal domain. This is Bifunctional protein GlmU from Escherichia coli O157:H7 (strain EC4115 / EHEC).